The chain runs to 307 residues: MAEISDLDRQIEQLLRCELIKESEVKALCAKAREILVEESNVQRVDSPVTVCGDIHGQFYDLKELFRVGGDVPETNYLFMGDFVDRGFYSVETFLLLLALKVRYPDRITLIRGNHESRQITQVYGFYDECLRKYGSVTVWRYCTEIFDYLSLSAIIDGKIFCVHGGLSPSIQTLDQIRTIDRKQEVPHDGPMCDLLWSDPEDTTGWGVSPRGAGYLFGSDVVAQFNAANDIDMICRAHQLVMEGYKWHFNETVLTVWSAPNYCYRCGNVAAILELDEHLQKDFIIFEAAPQETRGIPSKKPVADYFL.

The residue at position 2 (Ala-2) is an N-acetylalanine. Residues Asp-54, His-56, Asp-82, and Asn-114 each contribute to the Mn(2+) site. The active-site Proton donor is the His-115. Positions 164 and 238 each coordinate Mn(2+). The residue at position 307 (Leu-307) is a Leucine methyl ester.

This sequence belongs to the PPP phosphatase family. PP-4 (PP-X) subfamily. Serine/threonine-protein phosphatase 4 (PP4) occurs in different assemblies of the catalytic and one or more regulatory subunits. Component of the PP4 complexes PPP4C-PPP4R1, PPP4C-PPP4R2, PPP4C-PPP4R2-PPP4R3A, PPP4C-PPP4R2-PPP4R3B and PPP4C-PPP4R4. The PPP4C-PPP4R2 complex appears to be a tetramer composed of 2 molecules of PPP4C and 2 molecules of PPP4R2. Interacts with REL, NFKB1/p50 and RELA. Interacts with SMN1 and GEMIN4. Interacts with IRS4 (phosphorylated). Interacts with SMEK1/PPP4R3A; the interaction requires PP4R2. Interacts with HDAC3. Requires Mn(2+) as cofactor. Methylation at the C-terminal Leu-307 is critical for interactions with regulatory subunits and functions in DNA repair.

It is found in the cytoplasm. It localises to the nucleus. Its subcellular location is the cytoskeleton. The protein resides in the microtubule organizing center. The protein localises to the centrosome. The catalysed reaction is O-phospho-L-seryl-[protein] + H2O = L-seryl-[protein] + phosphate. It carries out the reaction O-phospho-L-threonyl-[protein] + H2O = L-threonyl-[protein] + phosphate. Functionally, protein phosphatase that is involved in many processes such as microtubule organization at centrosomes, maturation of spliceosomal snRNPs, apoptosis, DNA repair, tumor necrosis factor (TNF)-alpha signaling, activation of c-Jun N-terminal kinase MAPK8, regulation of histone acetylation, DNA damage checkpoint signaling, NF-kappa-B activation and cell migration. The PPP4C-PPP4R1 PP4 complex may play a role in dephosphorylation and regulation of HDAC3. The PPP4C-PPP4R2-PPP4R3A PP4 complex specifically dephosphorylates H2AX phosphorylated on Ser-140 (gamma-H2AX) generated during DNA replication and required for DNA DSB repair. Dephosphorylates NDEL1 at CDK1 phosphorylation sites and negatively regulates CDK1 activity in interphase. In response to DNA damage, catalyzes RPA2 dephosphorylation, an essential step for DNA repair since it allows the efficient RPA2-mediated recruitment of RAD51 to chromatin. The chain is Serine/threonine-protein phosphatase 4 catalytic subunit (PPP4C) from Oryctolagus cuniculus (Rabbit).